Reading from the N-terminus, the 153-residue chain is Membrane-spanning 4-domains subfamily A member 13 (153 aa).

Transmembrane regions (helical) follow at residues 1-21 (MTGI…MGQI), 36-56 (GCSL…RATW), 71-91 (ILCM…LSTF), and 111-131 (VLLS…IFGC).

This sequence belongs to the MS4A family.

It localises to the membrane. May be involved in signal transduction as a component of a multimeric receptor complex. The chain is Membrane-spanning 4-domains subfamily A member 13 (MS4A13) from Bos taurus (Bovine).